The chain runs to 842 residues: Protein translocase subunit SecA 1 (842 aa).

ATP-binding positions include Gln-85, 103–107, and Asp-493; that span reads GEGKT. Zn(2+) contacts are provided by Cys-824, Cys-826, Cys-835, and His-836.

This sequence belongs to the SecA family. As to quaternary structure, monomer and homodimer. Part of the essential Sec protein translocation apparatus which comprises SecA, SecYEG and auxiliary proteins SecDF. Other proteins may also be involved. Requires Zn(2+) as cofactor.

Its subcellular location is the cell membrane. It is found in the cytoplasm. It catalyses the reaction ATP + H2O + cellular proteinSide 1 = ADP + phosphate + cellular proteinSide 2.. In terms of biological role, part of the Sec protein translocase complex. Interacts with the SecYEG preprotein conducting channel. Has a central role in coupling the hydrolysis of ATP to the transfer of proteins into and across the cell membrane, serving as an ATP-driven molecular motor driving the stepwise translocation of polypeptide chains across the membrane. In Streptococcus agalactiae serotype Ia (strain ATCC 27591 / A909 / CDC SS700), this protein is Protein translocase subunit SecA 1.